The following is a 426-amino-acid chain: Serine hydroxymethyltransferase (426 aa).

(6S)-5,6,7,8-tetrahydrofolate-binding positions include leucine 118 and 122 to 124; that span reads GHL. An N6-(pyridoxal phosphate)lysine modification is found at lysine 227.

This sequence belongs to the SHMT family. As to quaternary structure, homodimer. Requires pyridoxal 5'-phosphate as cofactor.

Its subcellular location is the cytoplasm. The catalysed reaction is (6R)-5,10-methylene-5,6,7,8-tetrahydrofolate + glycine + H2O = (6S)-5,6,7,8-tetrahydrofolate + L-serine. It participates in one-carbon metabolism; tetrahydrofolate interconversion. The protein operates within amino-acid biosynthesis; glycine biosynthesis; glycine from L-serine: step 1/1. Its function is as follows. Catalyzes the reversible interconversion of serine and glycine with tetrahydrofolate (THF) serving as the one-carbon carrier. This reaction serves as the major source of one-carbon groups required for the biosynthesis of purines, thymidylate, methionine, and other important biomolecules. Also exhibits THF-independent aldolase activity toward beta-hydroxyamino acids, producing glycine and aldehydes, via a retro-aldol mechanism. The chain is Serine hydroxymethyltransferase from Mycolicibacterium paratuberculosis (strain ATCC BAA-968 / K-10) (Mycobacterium paratuberculosis).